Reading from the N-terminus, the 639-residue chain is E3 ubiquitin-protein ligase HEL2 (639 aa).

The segment at 1–55 (MSESVKENVTPTRNFRRTQGPQNNTKPHNDRKNFRRKQKKNNLSAEPNLTTSSAD) is disordered. Position 2 is an N-acetylserine (Ser2). Composition is skewed to polar residues over residues 7–26 (ENVTPTRNFRRTQGPQNNTK) and 43–54 (LSAEPNLTTSSA). Position 57 is a phosphothreonine (Thr57). The segment at 64 to 104 (CVICARKLTYVSLTPCHHKTCHICGFRQRALYNKKSCLICR) adopts an RING-type zinc-finger fold. The LIM zinc-binding domain maps to 222–292 (PMCAFCSGKR…QTCLDNKFVV (71 aa)). Residues 343–354 (SISSLPGSSSGS) show a composition bias toward low complexity. 2 disordered regions span residues 343 to 367 (SISSLPGSSSGSRTDVRSASSPEES) and 550 to 631 (LESK…GKQK). Ser354 carries the post-translational modification Phosphoserine.

The protein belongs to the ZNF598/HEL2 family. In terms of assembly, interacts with the E2 ubiquitin-conjugating enzyme UBC4. Interacts with histones H3 and H4.

It localises to the cytoplasm. The catalysed reaction is S-ubiquitinyl-[E2 ubiquitin-conjugating enzyme]-L-cysteine + [acceptor protein]-L-lysine = [E2 ubiquitin-conjugating enzyme]-L-cysteine + N(6)-ubiquitinyl-[acceptor protein]-L-lysine.. It functions in the pathway protein modification; protein ubiquitination. E3 ubiquitin-protein ligase that plays a key role in the ribosome quality control (RQC), a pathway that takes place when a ribosome has stalled during translation, leading to degradation of nascent peptide chains. HEL2 is activated when ribosomes are stalled within an mRNA following translation of prematurely polyadenylated mRNAs. Acts as a ribosome collision sensor: specifically recognizes and binds collided ribosome and ubiquitinates the 40S ribosomal proteins RPS20/uS10 and RPS3/uS3. Catalyzes 'Lys-63'-linked polyubiquitination of RPS20/uS10, promoting recruitment of the RQT (ribosome quality control trigger) complex, which drives the disassembly of stalled ribosomes, followed by degradation of nascent peptides. HEL2 also acts as an activator of the No-Go decay (NGD) pathway by mediating polyubiquitination of monoubiquitinated RPS3/uS3 and RPS7/es7: RPS3/uS3 and RPS7/es7 are first monoubiquitinated by MAG2 and MOT2/NOT4, respectively, and HEL2 mediates formation of 'Lys-63'-linked polyubiquitin chains on monoubiquitin, leading to activation of the NGD pathway in a CUE2-mediated endonucleolytic cleavage. Polyubiquitination of RPS3/uS3 also triggers degradation of non-functional 18S rRNA. The RQC pathway and the integrated stress response (ISR) antagonize each other: HEL2 prevents the activation of GCN2, while GCN2 suppresses RQC activation. The RQC pathway functions as a preventive quality control in the secretory pathway: HEL2 binds preferentially to the pre-engaged secretory ribosome-nascent chain complexes and prevents mistargeting of secretory proteins into mitochondria. Independently of its role in RQC, also involved in the polyubiquitination and proteasomal-degradation of excess histone proteins. The polypeptide is E3 ubiquitin-protein ligase HEL2 (Saccharomyces cerevisiae (strain ATCC 204508 / S288c) (Baker's yeast)).